Here is a 729-residue protein sequence, read N- to C-terminus: 1,4-alpha-glucan branching enzyme GlgB (729 aa).

The Nucleophile role is filled by Asp-407. Glu-460 (proton donor) is an active-site residue.

Belongs to the glycosyl hydrolase 13 family. GlgB subfamily. In terms of assembly, monomer.

It carries out the reaction Transfers a segment of a (1-&gt;4)-alpha-D-glucan chain to a primary hydroxy group in a similar glucan chain.. Its pathway is glycan biosynthesis; glycogen biosynthesis. Its function is as follows. Catalyzes the formation of the alpha-1,6-glucosidic linkages in glycogen by scission of a 1,4-alpha-linked oligosaccharide from growing alpha-1,4-glucan chains and the subsequent attachment of the oligosaccharide to the alpha-1,6 position. The polypeptide is 1,4-alpha-glucan branching enzyme GlgB (Pseudoalteromonas atlantica (strain T6c / ATCC BAA-1087)).